Here is a 297-residue protein sequence, read N- to C-terminus: 4-hydroxy-tetrahydrodipicolinate synthase (297 aa).

T47 is a binding site for pyruvate. Y135 acts as the Proton donor/acceptor in catalysis. Residue K163 is the Schiff-base intermediate with substrate of the active site. I205 lines the pyruvate pocket.

Belongs to the DapA family. In terms of assembly, homotetramer; dimer of dimers.

Its subcellular location is the cytoplasm. The catalysed reaction is L-aspartate 4-semialdehyde + pyruvate = (2S,4S)-4-hydroxy-2,3,4,5-tetrahydrodipicolinate + H2O + H(+). It functions in the pathway amino-acid biosynthesis; L-lysine biosynthesis via DAP pathway; (S)-tetrahydrodipicolinate from L-aspartate: step 3/4. In terms of biological role, catalyzes the condensation of (S)-aspartate-beta-semialdehyde [(S)-ASA] and pyruvate to 4-hydroxy-tetrahydrodipicolinate (HTPA). This Cytophaga hutchinsonii (strain ATCC 33406 / DSM 1761 / CIP 103989 / NBRC 15051 / NCIMB 9469 / D465) protein is 4-hydroxy-tetrahydrodipicolinate synthase.